Consider the following 700-residue polypeptide: Tectonic-2 (700 aa).

The signal sequence occupies residues 1–25 (MGSLSPLSFLWGLLLLQGVLRPLRG). Over 26–665 (DPVFIPPFIR…YYQGEPRPQC (640 aa)) the chain is Extracellular. Residues Asn-76, Asn-82, Asn-146, Asn-156, and Asn-389 are each glycosylated (N-linked (GlcNAc...) asparagine). The helical transmembrane segment at 666–682 (VAKGLMLLSLLMLAILL) threads the bilayer. At 683–700 (RHPWVGMCKAWSSASIQH) the chain is on the cytoplasmic side.

It belongs to the tectonic family. As to quaternary structure, part of the tectonic-like complex (also named B9 complex).

It localises to the membrane. The protein resides in the cytoplasm. It is found in the cytoskeleton. Its subcellular location is the cilium basal body. Functionally, component of the tectonic-like complex, a complex localized at the transition zone of primary cilia and acting as a barrier that prevents diffusion of transmembrane proteins between the cilia and plasma membranes. Required for hedgehog signaling transduction. This chain is Tectonic-2 (Tctn2), found in Rattus norvegicus (Rat).